Consider the following 241-residue polypeptide: Enolase-phosphatase E1 (241 aa).

Asp9 and Glu11 together coordinate Mg(2+). Residues 133 to 134 and Lys172 each bind substrate; that span reads SS. Asp198 is a binding site for Mg(2+).

This sequence belongs to the HAD-like hydrolase superfamily. MasA/MtnC family. As to quaternary structure, monomer. The cofactor is Mg(2+).

Its subcellular location is the cytoplasm. It is found in the nucleus. The enzyme catalyses 5-methylsulfanyl-2,3-dioxopentyl phosphate + H2O = 1,2-dihydroxy-5-(methylsulfanyl)pent-1-en-3-one + phosphate. It participates in amino-acid biosynthesis; L-methionine biosynthesis via salvage pathway; L-methionine from S-methyl-5-thio-alpha-D-ribose 1-phosphate: step 3/6. Its pathway is amino-acid biosynthesis; L-methionine biosynthesis via salvage pathway; L-methionine from S-methyl-5-thio-alpha-D-ribose 1-phosphate: step 4/6. Its function is as follows. Bifunctional enzyme that catalyzes the enolization of 2,3-diketo-5-methylthiopentyl-1-phosphate (DK-MTP-1-P) into the intermediate 2-hydroxy-3-keto-5-methylthiopentenyl-1-phosphate (HK-MTPenyl-1-P), which is then dephosphorylated to form the acireductone 1,2-dihydroxy-3-keto-5-methylthiopentene (DHK-MTPene). This chain is Enolase-phosphatase E1, found in Scheffersomyces stipitis (strain ATCC 58785 / CBS 6054 / NBRC 10063 / NRRL Y-11545) (Yeast).